The following is a 250-amino-acid chain: Proteasome subunit alpha (250 aa).

It belongs to the peptidase T1A family. The 20S proteasome core is composed of 14 alpha and 14 beta subunits that assemble into four stacked heptameric rings, resulting in a barrel-shaped structure. The two inner rings, each composed of seven catalytic beta subunits, are sandwiched by two outer rings, each composed of seven alpha subunits. The catalytic chamber with the active sites is on the inside of the barrel. Has a gated structure, the ends of the cylinder being occluded by the N-termini of the alpha-subunits. Is capped by the proteasome-associated ATPase, ARC.

It localises to the cytoplasm. It participates in protein degradation; proteasomal Pup-dependent pathway. Its activity is regulated as follows. The formation of the proteasomal ATPase ARC-20S proteasome complex, likely via the docking of the C-termini of ARC into the intersubunit pockets in the alpha-rings, may trigger opening of the gate for substrate entry. Interconversion between the open-gate and close-gate conformations leads to a dynamic regulation of the 20S proteasome proteolysis activity. Component of the proteasome core, a large protease complex with broad specificity involved in protein degradation. This Mycobacterium sp. (strain JLS) protein is Proteasome subunit alpha.